A 69-amino-acid polypeptide reads, in one-letter code: Putative membrane protein insertion efficiency factor (69 aa).

This sequence belongs to the UPF0161 family.

Its subcellular location is the cell membrane. Functionally, could be involved in insertion of integral membrane proteins into the membrane. This Desulfitobacterium hafniense (strain Y51) protein is Putative membrane protein insertion efficiency factor.